The following is an 85-amino-acid chain: Depressant insect toxin BmK ITa1 (85 aa).

Positions 1–21 (MKLFLLLLISASMLIDGLVNA) are cleaved as a signal peptide. An LCN-type CS-alpha/beta domain is found at 22–82 (DGYIRGSNGC…TWKSESNTCG (61 aa)). 4 disulfides stabilise this stretch: cysteine 31–cysteine 81, cysteine 35–cysteine 56, cysteine 42–cysteine 63, and cysteine 46–cysteine 65. Glycine 82 is subject to Glycine amide.

It belongs to the long (4 C-C) scorpion toxin superfamily. Sodium channel inhibitor family. Beta subfamily. As to expression, expressed by the venom gland.

The protein resides in the secreted. Its function is as follows. Depressant insect toxins cause a transient contraction paralysis followed by a slow flaccid paralysis. They bind voltage-independently to sodium channels (Nav) and block action potentials, primarily by depolarizing the axonal membrane and suppressing the sodium current. This is Depressant insect toxin BmK ITa1 from Olivierus martensii (Manchurian scorpion).